We begin with the raw amino-acid sequence, 163 residues long: Globin CTT-V (163 aa).

An N-terminal signal peptide occupies residues 1-16 (MKFFAVLTLCIIGAIA). The Globin domain occupies 18 to 163 (PLTSDEANLV…YTVAFEVIPA (146 aa)). Histidine 76 and histidine 111 together coordinate heme b.

Belongs to the globin family.

This chain is Globin CTT-V (CTT-V), found in Chironomus thummi piger (Midge).